A 56-amino-acid polypeptide reads, in one-letter code: Large ribosomal subunit protein bL32 (56 aa).

The protein belongs to the bacterial ribosomal protein bL32 family.

This is Large ribosomal subunit protein bL32 from Bacillus cereus (strain ATCC 14579 / DSM 31 / CCUG 7414 / JCM 2152 / NBRC 15305 / NCIMB 9373 / NCTC 2599 / NRRL B-3711).